We begin with the raw amino-acid sequence, 77 residues long: uncharacterized protein (77 aa).

The Inhibitor I9 domain maps to 5–74 (SYIVQLKDSV…FEPDQEMHTM (70 aa)).

It belongs to the protease inhibitor I9 family.

The protein localises to the cytoplasm. Its subcellular location is the nucleus. This is an uncharacterized protein from Schizosaccharomyces pombe (strain 972 / ATCC 24843) (Fission yeast).